A 140-amino-acid polypeptide reads, in one-letter code: Ribonuclease P protein component (140 aa).

It belongs to the RnpA family. As to quaternary structure, consists of a catalytic RNA component (M1 or rnpB) and a protein subunit.

The enzyme catalyses Endonucleolytic cleavage of RNA, removing 5'-extranucleotides from tRNA precursor.. RNaseP catalyzes the removal of the 5'-leader sequence from pre-tRNA to produce the mature 5'-terminus. It can also cleave other RNA substrates such as 4.5S RNA. The protein component plays an auxiliary but essential role in vivo by binding to the 5'-leader sequence and broadening the substrate specificity of the ribozyme. The polypeptide is Ribonuclease P protein component (Ralstonia pickettii (strain 12J)).